Consider the following 140-residue polypeptide: ATP synthase epsilon chain (140 aa).

Belongs to the ATPase epsilon chain family. In terms of assembly, F-type ATPases have 2 components, CF(1) - the catalytic core - and CF(0) - the membrane proton channel. CF(1) has five subunits: alpha(3), beta(3), gamma(1), delta(1), epsilon(1). CF(0) has three main subunits: a, b and c.

Its subcellular location is the cell inner membrane. Its function is as follows. Produces ATP from ADP in the presence of a proton gradient across the membrane. The protein is ATP synthase epsilon chain of Marinobacter nauticus (strain ATCC 700491 / DSM 11845 / VT8) (Marinobacter aquaeolei).